The chain runs to 115 residues: Probable 4-amino-4-deoxy-L-arabinose-phosphoundecaprenol flippase subunit ArnE (115 aa).

A run of 3 helical transmembrane segments spans residues 42–62, 65–85, and 93–112; these read PWPWLALLALGLGLACWLLLL, VEVGSAYPMLALNFVLVTLVA, and VDRRHLAGLLLIVAGVALLG. The EamA domain occupies 46–113; that stretch reads LALLALGLGL…IVAGVALLGR (68 aa).

This sequence belongs to the ArnE family. As to quaternary structure, heterodimer of ArnE and ArnF.

The protein localises to the cell inner membrane. Its pathway is bacterial outer membrane biogenesis; lipopolysaccharide biosynthesis. In terms of biological role, translocates 4-amino-4-deoxy-L-arabinose-phosphoundecaprenol (alpha-L-Ara4N-phosphoundecaprenol) from the cytoplasmic to the periplasmic side of the inner membrane. This chain is Probable 4-amino-4-deoxy-L-arabinose-phosphoundecaprenol flippase subunit ArnE, found in Pseudomonas paraeruginosa (strain DSM 24068 / PA7) (Pseudomonas aeruginosa (strain PA7)).